The primary structure comprises 501 residues: MEKWWLNSMLRNRELAYKCGLSKSTDRFGPIENTSVSEDPPILTDMDKNIHSWNDIENCSYNNVDYLVGVENIRNFLSNKSFLVRDSKRNSYSIYFAIENQILEIDNDHLFLSELESFFSRYTNSIYLNNSSKGDGDHYMYDTESSWNNNINSFIENYIRSQICIDNYILGDGDKYNDSYFYSYICSTIRKKSSERERTSIITSTNNLNDSDFTKIEGSNDLDETQKYKHLWIECENCYGLNYKKILKSKMNICEHCGYHLKMSSSDRIELSIDPGTWNPMDEDMISVDPIEFHSEEEPYKDRIDSYQKTTGLTEAVQTGTGHLNGIPVAIGIMDFEFMGGSMGSVVGEKITRLVEYATNQLLPLIVVCASGGARMQEGSLSLMQMAKISSALYDYQLNKKLFYVSILTSPTTGGVTASFGMLGDIIIAEPNAYIAFAGKRVIEQTLNKAVPEGSQAAEYLFHKGLFDSIVPRNPLKGILSELFQLHAFFPLIQNEKESRS.

One can recognise a CoA carboxyltransferase N-terminal domain in the interval 231–501 (LWIECENCYG…LIQNEKESRS (271 aa)). Zn(2+) is bound by residues Cys-235, Cys-238, Cys-254, and Cys-257. The C4-type zinc-finger motif lies at 235-257 (CENCYGLNYKKILKSKMNICEHC).

It belongs to the AccD/PCCB family. Acetyl-CoA carboxylase is a heterohexamer composed of biotin carboxyl carrier protein, biotin carboxylase and 2 subunits each of ACCase subunit alpha and ACCase plastid-coded subunit beta (accD). It depends on Zn(2+) as a cofactor.

The protein localises to the plastid. It is found in the chloroplast stroma. It carries out the reaction N(6)-carboxybiotinyl-L-lysyl-[protein] + acetyl-CoA = N(6)-biotinyl-L-lysyl-[protein] + malonyl-CoA. The protein operates within lipid metabolism; malonyl-CoA biosynthesis; malonyl-CoA from acetyl-CoA: step 1/1. Component of the acetyl coenzyme A carboxylase (ACC) complex. Biotin carboxylase (BC) catalyzes the carboxylation of biotin on its carrier protein (BCCP) and then the CO(2) group is transferred by the transcarboxylase to acetyl-CoA to form malonyl-CoA. This chain is Acetyl-coenzyme A carboxylase carboxyl transferase subunit beta, chloroplastic, found in Lotus japonicus (Lotus corniculatus var. japonicus).